Here is a 660-residue protein sequence, read N- to C-terminus: MSKRIALFPALLLALLVIVATALTWMNFSQALPRSQWAQAAWSPDIDVIEQMIFHYSLLPRLAISLLVGAGLGLVGVLFQQVLRNPLAEPTTLGVATGAQLGITVTTLWAIPGAMASQFAAQAGACVVGLIVFGVAWGKRLSPVTLILAGLVVSLYCGAINQLLVIFHHDQLQSMFLWSTGTLTQTDWGGVERLWPQLLGGVMLTLLLLRPLTLMGLDDGVARNLGLALSLARLAALSLAIVISALLVNAVGIIGFIGLFAPLLAKMLGARRLLPRLMLASLIGALILWLSDQIILWLTRVWMEVSTGSVTALIGAPLLLWLLPRLRSISAPDMKVNDRVAAERQHVLAFALAGGVLLLMAVVVALSFGRDAHGWTWASGALLEDLMPWRWPRIMAALFAGVMLAVAGCIIQRLTGNPMASPEVLGISSGAAFGVVLMLFLVPGNAFGWLLPAGSLGAAVTLLIIMIAAGRGGFSPHRMLLAGMALSTAFTMLLMMLQASGDPRMAQVLTWISGSTYNATDAQVWRTGIVMVILLAITPLCRRWLTILPLGGDTARAVGMALTPTRIALLLLAACLTATATMTIGPLSFVGLMAPHIARMMGFRRTMPHIVISALVGGLLLVFADWCGRMVLFPFQIPAGLLSTFIGAPYFIYLLRKQSR.

A run of 18 helical transmembrane segments spans residues 5-25, 62-82, 93-113, 118-138, 147-167, 197-217, 240-260, 277-297, 303-323, 348-368, 391-411, 424-444, 447-467, 479-499, 528-548, 567-587, 607-627, and 635-655; these read IALF…ALTW, LAIS…FQQV, LGVA…AIPG, QFAA…VAWG, ILAG…LVIF, QLLG…LMGL, AIVI…IGLF, LMLA…IILW, MEVS…LWLL, LAFA…ALSF, WPRI…GCII, VLGI…LVPG, FGWL…IIMI, MLLA…MLQA, GIVM…LTIL, IALL…IGPL, MPHI…ADWC, and FQIP…IYLL.

Belongs to the binding-protein-dependent transport system permease family. FecCD subfamily. In terms of assembly, the complex is composed of two ATP-binding proteins (FhuC), a transmembrane protein (FhuB) and a solute-binding protein (FhuD). FhuB interacts with FhuC. FhuB interacts with FhuD. FhuB binds substrate-loaded FhuD more strongly than FhuD alone.

The protein resides in the cell inner membrane. In terms of biological role, part of the ABC transporter complex FhuCDB involved in iron(3+)-hydroxamate import. Responsible for the translocation of the substrate across the membrane. The polypeptide is Iron(3+)-hydroxamate import system permease protein FhuB (fhuB) (Escherichia coli (strain K12)).